Consider the following 1178-residue polypeptide: MDDEGAPLSESAQVVDPDVRAHVYSLVTALGGFNGENADRYVLGDDALACLRDIKRWLKLHDEKNNRMDVARCLGEANLVNGDLLPILTLWSTSGQNSKFMSRIALACLELLVPLTWPLELHSEMTVNHHRHTPYLQQAQVLYKRGILGPGGSSLLRTIIRIGLPSMAVPRSDRTTRDEGILKLMLYLLRNIAVISPHSRLSAEGDEEETSRSATINAFQDQDAFALLLTMCSNVADDFNLQDVVLLEILFHIVKGVNVEKLFMNDTQRKAKRTEELGDLLQKESSLRREYAKNAPTRHGRFGTMIWVKRDDAKVSTVSGQDVLKDSQTTLYKMDQSKKWNKPQVRRRQTEVTVNNDFNTPVNLNSTATKNLRIFIEEFLDSGFNPLFTHVRKAIEREADRIMDINSRHYFYTVAWFLEAERVRRKYQRERHSQEDKSLKKMEPDSFALVASVLNQETFVFLNRSMQKSFDNKEVEDLTAEMRCFTQILLTVQEMAQSPLDDDQEVADNIQNRIFYEETTHDRIISIIRGYKDQGFGYLDACTQLAHVFLRMLEHYSKENVDMQIRSRRRIKRKAKQDDQAIDVEDEEHASEDEELMEAERVSKERKFDFKRFAAKFCNQKCVDTFVAFIKYYKELNTDQLKRAHRYFYRIAFKQEMSVLLFRLDIINLFYRMIKGPGALDSSKPIFKEWEELVRQILRRMIKKIDQRPALITELLFSKINSTVFYLEFGFEKQTISVSKRPPAELEVDPREAKTTDEKLSIVVRVMIKDEHINLVKWISEVLRLAADERESWESREQQPGEPTAPNPMIPVKPDDEACQKAMFSNAKLRLLMTLIGFERLGMEDVPGASWVVPSSFTSDDLRHTKRVIDQCLIEPATEDPDQDLSRLIRRKYANDARGGGRDEQNLDIDFGSDSEGEDNVPDGPLFPPNHRSKANALDQLKKQRQKRRKEDGDRETPDDEVLEERRRARLENALARQAKIKSDLYIHASDEESDEEADEEFFRLEEQRRKEQAARIKHALLHGVVEEISDKSSKKTGRKRQSDQHTTLNIDAHTKRQRRKNRTDKLDEGDDLVMAGTEAQSPDSPGLGSSSHDAKGIENTPLTSDEDELEFDDDLAFSRDRNRRKDFTPNVDKMVIEPAQQDADPAAPDEDDDEDAPVVGSSRRRVRGGFVIESDSE.

Disordered stretches follow at residues 576-596 (KQDD…DEEL), 792-811 (SWES…PMIP), 896-965 (DARG…VLEE), and 980-1178 (KIKS…SDSE). Residues 580–596 (QAIDVEDEEHASEDEEL) show a composition bias toward acidic residues. Positions 896 to 905 (DARGGGRDEQ) are enriched in basic and acidic residues. Residues 911–921 (FGSDSEGEDNV) are compositionally biased toward acidic residues. Basic and acidic residues-rich tracts occupy residues 981-991 (IKSDLYIHASD), 1001-1015 (EFFR…EQAA), and 1025-1034 (VVEEISDKSS). Over residues 1079 to 1092 (EAQSPDSPGLGSSS) the composition is skewed to polar residues. Over residues 1105–1116 (SDEDELEFDDDL) the composition is skewed to acidic residues. Residues 1117–1128 (AFSRDRNRRKDF) are compositionally biased toward basic and acidic residues. A compositionally biased stretch (low complexity) spans 1138-1147 (EPAQQDADPA). Residues 1148 to 1157 (APDEDDDEDA) are compositionally biased toward acidic residues.

This sequence belongs to the timeless family. In terms of assembly, component of the fork protection complex (FPC) consisting of tof1 and csm3.

It localises to the nucleus. Functionally, forms a fork protection complex (FPC) with csm3 and which is required for chromosome segregation during meiosis and DNA damage repair. FPC coordinates leading and lagging strand synthesis and moves with the replication fork. FPC stabilizes replication forks in a configuration that is recognized by replication checkpoint sensors. This Aspergillus clavatus (strain ATCC 1007 / CBS 513.65 / DSM 816 / NCTC 3887 / NRRL 1 / QM 1276 / 107) protein is Topoisomerase 1-associated factor 1 (tof1).